Here is a 185-residue protein sequence, read N- to C-terminus: Elongation factor P (185 aa).

The protein belongs to the elongation factor P family.

It localises to the cytoplasm. It participates in protein biosynthesis; polypeptide chain elongation. Involved in peptide bond synthesis. Stimulates efficient translation and peptide-bond synthesis on native or reconstituted 70S ribosomes in vitro. Probably functions indirectly by altering the affinity of the ribosome for aminoacyl-tRNA, thus increasing their reactivity as acceptors for peptidyl transferase. The protein is Elongation factor P of Burkholderia lata (strain ATCC 17760 / DSM 23089 / LMG 22485 / NCIMB 9086 / R18194 / 383).